The sequence spans 105 residues: Small ribosomal subunit protein uS10 (105 aa).

This sequence belongs to the universal ribosomal protein uS10 family. In terms of assembly, part of the 30S ribosomal subunit.

Functionally, involved in the binding of tRNA to the ribosomes. This chain is Small ribosomal subunit protein uS10, found in Synechococcus elongatus (strain ATCC 33912 / PCC 7942 / FACHB-805) (Anacystis nidulans R2).